An 836-amino-acid polypeptide reads, in one-letter code: Granulocyte colony-stimulating factor receptor (836 aa).

The first 24 residues, Met-1–Glu-24, serve as a signal peptide directing secretion. Residues Glu-25 to Leu-117 form the Ig-like C2-type domain. The Extracellular segment spans residues Glu-25–His-627. Disulfide bonds link Cys-26-Cys-52 and Cys-46-Cys-101. 4 N-linked (GlcNAc...) asparagine glycosylation sites follow: Asn-51, Asn-93, Asn-128, and Asn-134. 5 Fibronectin type-III domains span residues Ile-125–Pro-230, Arg-233–Arg-332, Pro-334–Pro-430, Ala-431–Ser-528, and Ala-530–Gly-623. Disulfide bonds link Cys-131-Cys-142, Cys-167-Cys-218, Cys-177-Cys-186, Cys-248-Cys-295, and Cys-266-Cys-309. Residues Trp-318–Ser-322 carry the WSXWS motif motif. 4 N-linked (GlcNAc...) asparagine glycosylation sites follow: Asn-389, Asn-474, Asn-579, and Asn-610. Residues Ile-628–Cys-650 form a helical membrane-spanning segment. Topologically, residues Ser-651–Phe-836 are cytoplasmic. The Box 1 motif motif lies at Leu-658–Ala-666.

It belongs to the type I cytokine receptor family. Type 2 subfamily. As to quaternary structure, homodimer. The dimeric receptor binds two CSF3 molecules. Interacts with CEACAM1; down-regulates the CSF3R-STAT3 pathway through recruitment of PTPN6 that dephosphorylates CSF3R. In terms of processing, N-glycosylated. In terms of tissue distribution, one or several isoforms have been found in myelogenous leukemia cell line KG-1, leukemia U-937 cell line, in bone marrow cells, placenta, and peripheral blood granulocytes. Isoform GCSFR-2 is found only in leukemia U-937 cells. Isoform GCSFR-3 is highly expressed in placenta.

The protein resides in the secreted. Its subcellular location is the cell membrane. Its function is as follows. Receptor for granulocyte colony-stimulating factor (CSF3), essential for granulocytic maturation. Plays a crucial role in the proliferation, differentiation and survival of cells along the neutrophilic lineage. In addition it may function in some adhesion or recognition events at the cell surface. The polypeptide is Granulocyte colony-stimulating factor receptor (CSF3R) (Homo sapiens (Human)).